Reading from the N-terminus, the 171-residue chain is S-ribosylhomocysteine lyase (171 aa).

Fe cation is bound by residues histidine 54, histidine 58, and cysteine 128.

This sequence belongs to the LuxS family. In terms of assembly, homodimer. Fe cation serves as cofactor.

It carries out the reaction S-(5-deoxy-D-ribos-5-yl)-L-homocysteine = (S)-4,5-dihydroxypentane-2,3-dione + L-homocysteine. Its function is as follows. Involved in the synthesis of autoinducer 2 (AI-2) which is secreted by bacteria and is used to communicate both the cell density and the metabolic potential of the environment. The regulation of gene expression in response to changes in cell density is called quorum sensing. Catalyzes the transformation of S-ribosylhomocysteine (RHC) to homocysteine (HC) and 4,5-dihydroxy-2,3-pentadione (DPD). The sequence is that of S-ribosylhomocysteine lyase from Shigella flexneri.